Reading from the N-terminus, the 371-residue chain is Queuine tRNA-ribosyltransferase (371 aa).

Aspartate 90 acts as the Proton acceptor in catalysis. Residues 90 to 94 (DSGGF), aspartate 144, glutamine 189, and glycine 215 each bind substrate. An RNA binding region spans residues 246–252 (GVGTPEN). Aspartate 265 serves as the catalytic Nucleophile. The interval 270–274 (TRNAR) is RNA binding; important for wobble base 34 recognition. 4 residues coordinate Zn(2+): cysteine 303, cysteine 305, cysteine 308, and histidine 334.

Belongs to the queuine tRNA-ribosyltransferase family. Homodimer. Within each dimer, one monomer is responsible for RNA recognition and catalysis, while the other monomer binds to the replacement base PreQ1. It depends on Zn(2+) as a cofactor.

It carries out the reaction 7-aminomethyl-7-carbaguanine + guanosine(34) in tRNA = 7-aminomethyl-7-carbaguanosine(34) in tRNA + guanine. The protein operates within tRNA modification; tRNA-queuosine biosynthesis. Functionally, catalyzes the base-exchange of a guanine (G) residue with the queuine precursor 7-aminomethyl-7-deazaguanine (PreQ1) at position 34 (anticodon wobble position) in tRNAs with GU(N) anticodons (tRNA-Asp, -Asn, -His and -Tyr). Catalysis occurs through a double-displacement mechanism. The nucleophile active site attacks the C1' of nucleotide 34 to detach the guanine base from the RNA, forming a covalent enzyme-RNA intermediate. The proton acceptor active site deprotonates the incoming PreQ1, allowing a nucleophilic attack on the C1' of the ribose to form the product. After dissociation, two additional enzymatic reactions on the tRNA convert PreQ1 to queuine (Q), resulting in the hypermodified nucleoside queuosine (7-(((4,5-cis-dihydroxy-2-cyclopenten-1-yl)amino)methyl)-7-deazaguanosine). This Helicobacter pylori (strain HPAG1) protein is Queuine tRNA-ribosyltransferase.